The chain runs to 449 residues: Malonyl-CoA:anthocyanidin 5-O-glucoside-6''-O-malonyltransferase (449 aa).

An N-acetylmethionine modification is found at Met1. Active-site proton acceptor residues include His162 and Asp394.

The protein belongs to the plant acyltransferase family. Expressed in flowers. Detected in leaves, stems, roots and siliques.

The enzyme catalyses anthocyanin A3 + malonyl-CoA = anthocyanin A5 + CoA. It carries out the reaction anthocyanin A7 + malonyl-CoA = anthocyanin A9 + CoA. The catalysed reaction is anthocyanin A6 + malonyl-CoA = anthocyanin A8 + CoA. It catalyses the reaction anthocyanin A10 + malonyl-CoA = anthocyanin A11 + CoA. In terms of biological role, catalyzes the malonylation of the 5-O-glucose residue of anthocyanins, using malonyl-CoA as the malonyl donor. Acts only on anthocyanin substrates containing a 5-O-glucosyl moiety. Acts on the four native A.thaliana anthocyanins, A3, A7, and to a lesser extent, A6 and A10. Can also use the non-native anthocyanin compounds cyanin (cyanidin 3,5-diglucoside), malvin, pelargonidin 3,5-diglucoside, peonidin 3,5-diglucoside, cyanidin 3-coumaroylglucoside 5-glucoside, delphinidin 3-coumaroylrutinoside 5-glucoside and petunidin 3-coumaroylrutinoside 5-glucoside as substrates. Is the sole enzyme responsible for producing malonylated anthocyanin 5-O-glucosides in A.thaliana. Is not able to catalyze acyl transfer using acetyl-CoA, butyryl-CoA, hexanoyl-CoA, benzoyl-CoA, cinnamoyl-CoA, methylmalonyl-CoA, succinyl-CoA, p-coumaroyl-CoA or caffeoyl-CoA. This is Malonyl-CoA:anthocyanidin 5-O-glucoside-6''-O-malonyltransferase (5MAT) from Arabidopsis thaliana (Mouse-ear cress).